The sequence spans 396 residues: 1-deoxy-D-xylulose 5-phosphate reductoisomerase (396 aa).

Positions 13, 14, 15, 16, and 127 each coordinate NADPH. K128 lines the 1-deoxy-D-xylulose 5-phosphate pocket. E129 serves as a coordination point for NADPH. D153 provides a ligand contact to Mn(2+). 1-deoxy-D-xylulose 5-phosphate contacts are provided by S154, E155, S184, and H207. Position 155 (E155) interacts with Mn(2+). G213 lines the NADPH pocket. 4 residues coordinate 1-deoxy-D-xylulose 5-phosphate: S220, N225, K226, and E229. Residue E229 coordinates Mn(2+).

The protein belongs to the DXR family. Mg(2+) is required as a cofactor. The cofactor is Mn(2+).

It catalyses the reaction 2-C-methyl-D-erythritol 4-phosphate + NADP(+) = 1-deoxy-D-xylulose 5-phosphate + NADPH + H(+). Its pathway is isoprenoid biosynthesis; isopentenyl diphosphate biosynthesis via DXP pathway; isopentenyl diphosphate from 1-deoxy-D-xylulose 5-phosphate: step 1/6. Catalyzes the NADPH-dependent rearrangement and reduction of 1-deoxy-D-xylulose-5-phosphate (DXP) to 2-C-methyl-D-erythritol 4-phosphate (MEP). The sequence is that of 1-deoxy-D-xylulose 5-phosphate reductoisomerase from Pseudomonas savastanoi pv. phaseolicola (strain 1448A / Race 6) (Pseudomonas syringae pv. phaseolicola (strain 1448A / Race 6)).